The sequence spans 446 residues: Putative ZDHHC-type palmitoyltransferase 2 (446 aa).

2 disordered regions span residues 1-33 and 56-83; these read MNLY…INNN and QIIN…HNNP. Residues asparagine 5, asparagine 8, asparagine 14, and asparagine 21 are each glycosylated (N-linked (GlcNAc...) asparagine). Positions 56–81 are enriched in low complexity; that stretch reads QIINKNNNNNHNRNNNNNNNNNNNHN. 4 N-linked (GlcNAc...) asparagine glycosylation sites follow: asparagine 141, asparagine 145, asparagine 159, and asparagine 165. Transmembrane regions (helical) follow at residues 178–198, 210–230, 305–325, 349–369, and 410–430; these read IVIF…IFPW, IHSF…YLCS, YFVL…TLLI, LFLL…IMAL, and IISN…LPTI. In terms of domain architecture, DHHC spans 261–311; sequence KWCNKCNHQKPERAHHCRYCNRCVLRMDHHCQWLQNCIGLFNQKYFVLFLF.

Belongs to the DHHC palmitoyltransferase family.

Its subcellular location is the membrane. The enzyme catalyses L-cysteinyl-[protein] + hexadecanoyl-CoA = S-hexadecanoyl-L-cysteinyl-[protein] + CoA. This chain is Putative ZDHHC-type palmitoyltransferase 2, found in Dictyostelium discoideum (Social amoeba).